We begin with the raw amino-acid sequence, 238 residues long: ATP-dependent dethiobiotin synthetase BioD (238 aa).

An ATP-binding site is contributed by 12-17; that stretch reads GVGKTV. Thr16 lines the Mg(2+) pocket. Lys37 is a catalytic residue. Thr41 is a binding site for substrate. Residues Asp50, 109–112, 170–171, and 200–202 contribute to the ATP site; these read EGAG, GS, and PAG. Residues Asp50 and Glu109 each contribute to the Mg(2+) site.

It belongs to the dethiobiotin synthetase family. As to quaternary structure, homodimer. It depends on Mg(2+) as a cofactor.

Its subcellular location is the cytoplasm. The enzyme catalyses (7R,8S)-7,8-diammoniononanoate + CO2 + ATP = (4R,5S)-dethiobiotin + ADP + phosphate + 3 H(+). The protein operates within cofactor biosynthesis; biotin biosynthesis; biotin from 7,8-diaminononanoate: step 1/2. Catalyzes a mechanistically unusual reaction, the ATP-dependent insertion of CO2 between the N7 and N8 nitrogen atoms of 7,8-diaminopelargonic acid (DAPA, also called 7,8-diammoniononanoate) to form a ureido ring. The chain is ATP-dependent dethiobiotin synthetase BioD from Frankia casuarinae (strain DSM 45818 / CECT 9043 / HFP020203 / CcI3).